The following is a 375-amino-acid chain: Peroxisomal targeting signal 2 receptor (375 aa).

WD repeat units lie at residues 58–89 (LTQDCLFDLAWNESHENQVLVAQGDGTLRLFD), 102–133 (EHEREVFSCNWNLVNRQNFLSSSWDGSIKIWS), 172–203 (KNRNCVYQAQFSPHDQNLVLSCSGNSYASLFD), 218–249 (HSGLEALTCDFNKYRPYVVATGGVDNAIRIWD), 281–312 (AHGLAIRKVTWSPHHSNILMSASYDMTCRIWR), and 340–372 (QHSEFVFGADWSLWGKPGYVASTAWDGNLFVWN).

The protein belongs to the WD repeat peroxin-7 family. As to quaternary structure, interacts with PEX21.

It localises to the cytoplasm. The protein localises to the cytosol. It is found in the peroxisome matrix. Receptor required for the peroxisomal import of proteins containing a C-terminal PTS2-type peroxisomal targeting signal, such as 3-oxoacyl-CoA thiolase. Specifically binds to cargo proteins containing a PTS2 peroxisomal targeting signal in the cytosol. Cargo protein-binding triggers interaction with PEX21 and formation of a ternary complex composed of PEX21 and PEX7 along with PTS2-containing cargo proteins, which is tranlocated into peroxisomes by passing through the PEX13-PEX14 docking complex. The protein is Peroxisomal targeting signal 2 receptor of Saccharomyces cerevisiae (strain ATCC 204508 / S288c) (Baker's yeast).